The following is a 314-amino-acid chain: Probable manganese-dependent inorganic pyrophosphatase (314 aa).

Residues His-7, Asp-11, Asp-13, Asp-72, His-94, and Asp-146 each coordinate Mn(2+).

Belongs to the PPase class C family. Mn(2+) is required as a cofactor.

It localises to the cytoplasm. It carries out the reaction diphosphate + H2O = 2 phosphate + H(+). This Deinococcus radiodurans (strain ATCC 13939 / DSM 20539 / JCM 16871 / CCUG 27074 / LMG 4051 / NBRC 15346 / NCIMB 9279 / VKM B-1422 / R1) protein is Probable manganese-dependent inorganic pyrophosphatase (ppaC).